The following is a 364-amino-acid chain: DNA polymerase IV (364 aa).

The 185-residue stretch at 14 to 198 (IIHIDMDAFF…LPIEKFHGVG (185 aa)) folds into the UmuC domain. Residues D18 and D116 each coordinate Mg(2+). E117 is an active-site residue.

The protein belongs to the DNA polymerase type-Y family. In terms of assembly, monomer. The cofactor is Mg(2+).

The protein resides in the cytoplasm. The enzyme catalyses DNA(n) + a 2'-deoxyribonucleoside 5'-triphosphate = DNA(n+1) + diphosphate. Functionally, poorly processive, error-prone DNA polymerase involved in untargeted mutagenesis. Copies undamaged DNA at stalled replication forks, which arise in vivo from mismatched or misaligned primer ends. These misaligned primers can be extended by PolIV. Exhibits no 3'-5' exonuclease (proofreading) activity. May be involved in translesional synthesis, in conjunction with the beta clamp from PolIII. In Streptococcus pyogenes serotype M2 (strain MGAS10270), this protein is DNA polymerase IV.